The following is a 692-amino-acid chain: Elongation factor G (692 aa).

The tr-type G domain occupies 8 to 282 (ENTRNIGIMA…AVIDYLPSPL (275 aa)). GTP contacts are provided by residues 17-24 (AHIDAGKT), 81-85 (DTPGH), and 135-138 (NKMD).

Belongs to the TRAFAC class translation factor GTPase superfamily. Classic translation factor GTPase family. EF-G/EF-2 subfamily.

It localises to the cytoplasm. Catalyzes the GTP-dependent ribosomal translocation step during translation elongation. During this step, the ribosome changes from the pre-translocational (PRE) to the post-translocational (POST) state as the newly formed A-site-bound peptidyl-tRNA and P-site-bound deacylated tRNA move to the P and E sites, respectively. Catalyzes the coordinated movement of the two tRNA molecules, the mRNA and conformational changes in the ribosome. The polypeptide is Elongation factor G (Bacillus cereus (strain ZK / E33L)).